A 175-amino-acid chain; its full sequence is Deoxyuridine 5'-triphosphate nucleotidohydrolase (175 aa).

Substrate is bound by residues 67–69 (RSG), Asn80, 84–86 (TVD), and Lys94. Positions 138–175 (RAEGGFGSTGGHAAVGADTNGQQGGNRYASVVSDRKGQ) are disordered.

Belongs to the dUTPase family. The cofactor is Mg(2+).

It catalyses the reaction dUTP + H2O = dUMP + diphosphate + H(+). It participates in pyrimidine metabolism; dUMP biosynthesis; dUMP from dCTP (dUTP route): step 2/2. Its function is as follows. This enzyme is involved in nucleotide metabolism: it produces dUMP, the immediate precursor of thymidine nucleotides and it decreases the intracellular concentration of dUTP so that uracil cannot be incorporated into DNA. The protein is Deoxyuridine 5'-triphosphate nucleotidohydrolase of Streptomyces avermitilis (strain ATCC 31267 / DSM 46492 / JCM 5070 / NBRC 14893 / NCIMB 12804 / NRRL 8165 / MA-4680).